A 389-amino-acid chain; its full sequence is uncharacterized protein (389 aa).

An N-terminal signal peptide occupies residues 1–29 (MQPSFTPSGGKWLSIAVILLVIGLVVGFA).

This sequence belongs to the bacterial solute-binding protein 1 family. WtpA subfamily.

This is an uncharacterized protein from Thermoplasma volcanium (strain ATCC 51530 / DSM 4299 / JCM 9571 / NBRC 15438 / GSS1).